A 41-amino-acid polypeptide reads, in one-letter code: Large ribosomal subunit protein bL36 (41 aa).

The protein belongs to the bacterial ribosomal protein bL36 family.

This Pelagibacter ubique (strain HTCC1062) protein is Large ribosomal subunit protein bL36.